The sequence spans 530 residues: Bifunctional purine biosynthesis protein PurH (530 aa).

The MGS-like domain occupies 1-148; the sequence is MNNARPIRRA…KNHKDVTIVV (148 aa).

The protein belongs to the PurH family.

It carries out the reaction (6R)-10-formyltetrahydrofolate + 5-amino-1-(5-phospho-beta-D-ribosyl)imidazole-4-carboxamide = 5-formamido-1-(5-phospho-D-ribosyl)imidazole-4-carboxamide + (6S)-5,6,7,8-tetrahydrofolate. The enzyme catalyses IMP + H2O = 5-formamido-1-(5-phospho-D-ribosyl)imidazole-4-carboxamide. It participates in purine metabolism; IMP biosynthesis via de novo pathway; 5-formamido-1-(5-phospho-D-ribosyl)imidazole-4-carboxamide from 5-amino-1-(5-phospho-D-ribosyl)imidazole-4-carboxamide (10-formyl THF route): step 1/1. Its pathway is purine metabolism; IMP biosynthesis via de novo pathway; IMP from 5-formamido-1-(5-phospho-D-ribosyl)imidazole-4-carboxamide: step 1/1. This is Bifunctional purine biosynthesis protein PurH from Vibrio campbellii (strain ATCC BAA-1116).